The sequence spans 462 residues: Arginine biosynthesis bifunctional protein ArgJ, mitochondrial (462 aa).

Substrate is bound by residues threonine 189, lysine 215, threonine 236, glutamate 327, asparagine 457, and serine 462. The Nucleophile role is filled by threonine 236.

This sequence belongs to the ArgJ family. In terms of assembly, heterodimer of an alpha and a beta chain. The alpha and beta chains are autoproteolytically processed from a single precursor protein within the mitochondrion.

It is found in the mitochondrion matrix. It carries out the reaction N(2)-acetyl-L-ornithine + L-glutamate = N-acetyl-L-glutamate + L-ornithine. The catalysed reaction is L-glutamate + acetyl-CoA = N-acetyl-L-glutamate + CoA + H(+). Its pathway is amino-acid biosynthesis; L-arginine biosynthesis; L-ornithine and N-acetyl-L-glutamate from L-glutamate and N(2)-acetyl-L-ornithine (cyclic): step 1/1. The protein operates within amino-acid biosynthesis; L-arginine biosynthesis; N(2)-acetyl-L-ornithine from L-glutamate: step 1/4. In terms of biological role, catalyzes two activities which are involved in the cyclic version of arginine biosynthesis: the synthesis of acetylglutamate from glutamate and acetyl-CoA, and of ornithine by transacetylation between acetylornithine and glutamate. This chain is Arginine biosynthesis bifunctional protein ArgJ, mitochondrial, found in Postia placenta (strain ATCC 44394 / Madison 698-R) (Brown rot fungus).